Here is a 304-residue protein sequence, read N- to C-terminus: Acetylglutamate kinase (304 aa).

Residues 82–83 (GG), R104, and N197 each bind substrate.

This sequence belongs to the acetylglutamate kinase family. ArgB subfamily.

The protein resides in the cytoplasm. The enzyme catalyses N-acetyl-L-glutamate + ATP = N-acetyl-L-glutamyl 5-phosphate + ADP. It participates in amino-acid biosynthesis; L-arginine biosynthesis; N(2)-acetyl-L-ornithine from L-glutamate: step 2/4. Functionally, catalyzes the ATP-dependent phosphorylation of N-acetyl-L-glutamate. The chain is Acetylglutamate kinase from Prochlorococcus marinus (strain NATL1A).